The primary structure comprises 1625 residues: E3 ubiquitin-protein ligase KEG (1625 aa).

The segment at 10–56 (CSVCHTRYNEDERVPLLLQCGHGFCKDCLSKMFSTSSDTTLTCPRCR) adopts an RING-type zinc-finger fold. Positions 91-106 (YTDDEDDDDEEDGSDE) are enriched in acidic residues. The tract at residues 91–110 (YTDDEDDDDEEDGSDEDGAR) is disordered. Positions 141-427 (RQIGEESSSG…TFNAMLATFL (287 aa)) constitute a Protein kinase domain. Residues 147 to 155 (SSSGGFGGV) and lysine 176 each bind ATP. 11 ANK repeats span residues 467-496 (DNPN…AGGG), 510-540 (DGQS…NVDI), 544-573 (DGDP…NVRS), 579-608 (SGPS…DPNA), 612-641 (EGET…SRSM), 647-676 (KCLT…PEEI), 685-720 (PVGT…DPTA), 725-754 (HGRT…NANI), 758-787 (HNTI…DCNI), 791-826 (EGDN…AVDV), and 832-863 (KTVR…HLSP).

As to quaternary structure, interacts with ABI5 and EDR1. In terms of processing, autophosphotylated and autoubiquitinated in vitro. Post-translationally, phosphorylation enhances self-ubiquitination. Autoubiquitinated in response to abscisic acid (ABA) and subsequently targeted to proteolysis. Expressed in all tissues of young seedlings. In flowering plants, only detected in the youngest part of the stem, anthers and the receptacle of immature siliques. Not found in mature leave, older parts of the stem, flower parts other than anthers or mature siliques.

It localises to the golgi apparatus. It is found in the trans-Golgi network. The protein resides in the early endosome. The catalysed reaction is L-seryl-[protein] + ATP = O-phospho-L-seryl-[protein] + ADP + H(+). It carries out the reaction L-threonyl-[protein] + ATP = O-phospho-L-threonyl-[protein] + ADP + H(+). It catalyses the reaction S-ubiquitinyl-[E2 ubiquitin-conjugating enzyme]-L-cysteine + [acceptor protein]-L-lysine = [E2 ubiquitin-conjugating enzyme]-L-cysteine + N(6)-ubiquitinyl-[acceptor protein]-L-lysine.. It participates in protein modification; protein ubiquitination. Its function is as follows. Mediates E2-dependent protein ubiquitination. Acts as a negative regulator of abscisic acid signaling. Required for ABI5 degradation, by mediating its ubiquitination. Together with EDR1, may regulate endocytic trafficking and/or the formation of signaling complexes on trans-Golgi network (TGN)/ early endosome (EE) vesicles during stress responses. This chain is E3 ubiquitin-protein ligase KEG (KEG), found in Arabidopsis thaliana (Mouse-ear cress).